A 217-amino-acid polypeptide reads, in one-letter code: Probable chemoreceptor glutamine deamidase CheD (217 aa).

Positions 194–217 (ATSGTAPSRGGELFTRASASRTPS) are disordered.

This sequence belongs to the CheD family.

It catalyses the reaction L-glutaminyl-[protein] + H2O = L-glutamyl-[protein] + NH4(+). Functionally, probably deamidates glutamine residues to glutamate on methyl-accepting chemotaxis receptors (MCPs), playing an important role in chemotaxis. The chain is Probable chemoreceptor glutamine deamidase CheD from Cupriavidus pinatubonensis (strain JMP 134 / LMG 1197) (Cupriavidus necator (strain JMP 134)).